A 156-amino-acid polypeptide reads, in one-letter code: Arginine repressor (156 aa).

Belongs to the ArgR family.

The protein resides in the cytoplasm. It functions in the pathway amino-acid biosynthesis; L-arginine biosynthesis [regulation]. Regulates arginine biosynthesis genes. This is Arginine repressor from Edwardsiella ictaluri (strain 93-146).